Here is a 1774-residue protein sequence, read N- to C-terminus: U3 small nucleolar RNA-associated protein 10 (1774 aa).

The interval 1206-1226 (YDKHSSAGSNDEEAGSESEAE) is disordered. Positions 1215 to 1226 (NDEEAGSESEAE) are enriched in acidic residues. The stretch at 1734–1772 (LVPIIAELLEDEDEEVEYEVRSGLVKVVESVMGEPFDRY) is one HEAT repeat.

It belongs to the HEATR1/UTP10 family. As to quaternary structure, component of the ribosomal small subunit (SSU) processome.

The protein resides in the nucleus. Its subcellular location is the nucleolus. Involved in nucleolar processing of pre-18S ribosomal RNA. Involved in ribosome biosynthesis. The chain is U3 small nucleolar RNA-associated protein 10 from Kluyveromyces lactis (strain ATCC 8585 / CBS 2359 / DSM 70799 / NBRC 1267 / NRRL Y-1140 / WM37) (Yeast).